A 447-amino-acid polypeptide reads, in one-letter code: Adenylosuccinate synthetase (447 aa).

GTP contacts are provided by residues 12–18 and 40–42; these read GDEGKGK and GHT. Asp13 functions as the Proton acceptor in the catalytic mechanism. Residues Asp13 and Gly40 each coordinate Mg(2+). IMP-binding positions include 13–16, 38–41, Thr128, Arg142, Gln223, Thr238, and Arg302; these read DEGK and NAGH. The active-site Proton donor is His41. Residue 298-304 participates in substrate binding; the sequence is TTTGRKR. GTP contacts are provided by residues Arg304, 330-332, and 412-414; these read KLD and SLG.

The protein belongs to the adenylosuccinate synthetase family. As to quaternary structure, homodimer. It depends on Mg(2+) as a cofactor.

The protein resides in the cytoplasm. It carries out the reaction IMP + L-aspartate + GTP = N(6)-(1,2-dicarboxyethyl)-AMP + GDP + phosphate + 2 H(+). The protein operates within purine metabolism; AMP biosynthesis via de novo pathway; AMP from IMP: step 1/2. Functionally, plays an important role in the de novo pathway of purine nucleotide biosynthesis. Catalyzes the first committed step in the biosynthesis of AMP from IMP. The protein is Adenylosuccinate synthetase of Nostoc sp. (strain PCC 7120 / SAG 25.82 / UTEX 2576).